We begin with the raw amino-acid sequence, 152 residues long: MSTINTDTNETMPHVSVNAQYIKDLSLENPSAPSSLAALDQRPQIDLSLDINITNLSEENFYEVELNIEAIARNEKYKLFQIELKYAGVFNLINIDSEQHPVLLSVHCPAMIFPFARKIIASCTQDAGFQPLMIDPIDFGALYHKKMSEHQN.

The protein belongs to the SecB family. In terms of assembly, homotetramer, a dimer of dimers. One homotetramer interacts with 1 SecA dimer.

The protein resides in the cytoplasm. In terms of biological role, one of the proteins required for the normal export of preproteins out of the cell cytoplasm. It is a molecular chaperone that binds to a subset of precursor proteins, maintaining them in a translocation-competent state. It also specifically binds to its receptor SecA. This Rickettsia africae (strain ESF-5) protein is Protein-export protein SecB.